The chain runs to 203 residues: MIMNGRWSFNTLAIIFILLSTAALSAHFRVCEPYSDHKGRYHFGFHCPRLSDNKTYIFCCHHNNTAFKYCCNETEFQSVMQLNLTANSDSFAHNNYTALIGVWIYGFFVMVLLALDFLYYSAMNYELCRVYLEKWGLGGRWLKQARSQWHSTVQEGELNTGPGLSQQQQLHLHHHHHHHHPRHSLRGDTQSPTLLSFQTSTAW.

The N-terminal stretch at 1 to 25 (MIMNGRWSFNTLAIIFILLSTAALS) is a signal peptide. Residues 26 to 97 (AHFRVCEPYS…SDSFAHNNYT (72 aa)) are Extracellular-facing. Asparagine 53, asparagine 63, asparagine 72, asparagine 83, and asparagine 95 each carry an N-linked (GlcNAc...) asparagine glycan. Residues 98–118 (ALIGVWIYGFFVMVLLALDFL) form a helical membrane-spanning segment. At 119–203 (YYSAMNYELC…LLSFQTSTAW (85 aa)) the chain is on the cytoplasmic side. Positions 157-191 (ELNTGPGLSQQQQLHLHHHHHHHHPRHSLRGDTQS) are disordered. A compositionally biased stretch (low complexity) spans 161 to 170 (GPGLSQQQQL). Positions 171 to 184 (HLHHHHHHHHPRHS) are enriched in basic residues.

Belongs to the shisa family.

It is found in the membrane. In Danio rerio (Zebrafish), this protein is Protein shisa-like-1a (shisal1a).